Here is a 75-residue protein sequence, read N- to C-terminus: Small ribosomal subunit protein bS18c (75 aa).

This sequence belongs to the bacterial ribosomal protein bS18 family. In terms of assembly, part of the 30S ribosomal subunit.

It is found in the plastid. The chain is Small ribosomal subunit protein bS18c from Aneura mirabilis (Parasitic liverwort).